A 140-amino-acid polypeptide reads, in one-letter code: Midkine (140 aa).

The signal sequence occupies residues 1–22; the sequence is MQHRGFFLLALLALLVVTSAVA. 5 cysteine pairs are disulfide-bonded: cysteine 34/cysteine 58, cysteine 42/cysteine 67, cysteine 49/cysteine 71, cysteine 81/cysteine 113, and cysteine 91/cysteine 123.

It belongs to the pleiotrophin family. As to quaternary structure, homodimer. Interacts with ALK. Interacts with LRP1; promotes neuronal survival. Interacts with LRP2. Interacts with NCAM1. Interacts (via C-terminal) with PTPRZ1 (via chondroitin sulfate chains); this interaction is inhibited by PTN; this interaction promotes neuronal migration. Interacts with NCL; this interaction promotes NCL clustering and lateral movements of this complex into lipid rafts leading to MDK internalization. Interacts with LRP6 and LRP8: this interaction is calcium dependent. Interacts with ITGA4. Interacts with ITGA6. Interacts with ITGB1. Interacts with ITGA4:ITGB1 complex; this interaction mediates MDK-induced osteoblast cells migration through PXN phosphorylation. Interacts with ITGA6:ITGB1 complex; this interaction mediates MDK-induced neurite outgrowth. Interacts with NOTCH2; this interactio mediates a nuclear accumulation of NOTCH2 and therefore activation of NOTCH2 signaling leading to interaction between HES1 and STAT3. Interacts with GPC2 (via heparan sulfate chain); this interaction is inhibited by heparin followed by chondroitin sulfate E; this interaction induces GPC2 clustering through heparan sulfate chain; this interaction induces neuronal cell adhesion and neurite outgrowth. Interacts with SDC3; this interaction induces SDC3 clustering; this interaction induces neuronal cell adhesion and neurite outgrowth. Interacts with SDC1. Interacts with CSPG5; this interaction promotes elongation of oligodendroglial precursor-like cells. As to expression, expressed in the follicular epithelium and granulosa cells of the ovary.

The protein resides in the secreted. Functionally, secreted protein that functions as a cytokine and growth factor and mediates its signal through cell-surface proteoglycan and non-proteoglycan receptors. Binds cell-surface proteoglycan receptors via their chondroitin sulfate (CS) groups. Thereby regulates many processes like inflammatory response, cell proliferation, cell adhesion, cell growth, cell survival, tissue regeneration, cell differentiation and cell migration. Participates in inflammatory processes by exerting two different activities. Firstly, mediates neutrophils and macrophages recruitment to the sites of inflammation both by direct action by cooperating namely with ITGB2 via LRP1 and by inducing chemokine expression. This inflammation can be accompanied by epithelial cell survival and smooth muscle cell migration after renal and vessel damage, respectively. Secondly, suppresses the development of tolerogenic dendric cells thereby inhibiting the differentiation of regulatory T cells and also promote T cell expansion through NFAT signaling and Th1 cell differentiation. Promotes tissue regeneration after injury or trauma. After heart damage negatively regulates the recruitment of inflammatory cells and mediates cell survival through activation of anti-apoptotic signaling pathways via MAPKs and AKT pathways through the activation of angiogenesis. Also facilitates liver regeneration as well as bone repair by recruiting macrophage at trauma site and by promoting cartilage development by facilitating chondrocyte differentiation. Plays a role in brain by promoting neural precursor cells survival and growth through interaction with heparan sulfate proteoglycans. Binds PTPRZ1 and promotes neuronal migration and embryonic neurons survival. Binds SDC3 or GPC2 and mediates neurite outgrowth and cell adhesion. Binds chondroitin sulfate E and heparin leading to inhibition of neuronal cell adhesion induced by binding with GPC2. Binds CSPG5 and promotes elongation of oligodendroglial precursor-like cells. Also binds ITGA6:ITGB1 complex; this interaction mediates MDK-induced neurite outgrowth. Binds LRP1; promotes neuronal survival. Binds ITGA4:ITGB1 complex; this interaction mediates MDK-induced osteoblast cells migration through PXN phosphorylation. Binds anaplastic lymphoma kinase (ALK) which induces ALK activation and subsequent phosphorylation of the insulin receptor substrate (IRS1), followed by the activation of mitogen-activated protein kinase (MAPK) and PI3-kinase, and the induction of cell proliferation. Promotes epithelial to mesenchymal transition through interaction with NOTCH2. During arteriogenesis, plays a role in vascular endothelial cell proliferation by inducing VEGFA expression and release which in turn induces nitric oxide synthase expression. Moreover activates vasodilation through nitric oxide synthase activation. Negatively regulates bone formation in response to mechanical load by inhibiting Wnt/beta-catenin signaling in osteoblasts. In addition plays a role in hippocampal development, working memory, auditory response, early fetal adrenal gland development and the female reproductive system. This Mus musculus (Mouse) protein is Midkine.